We begin with the raw amino-acid sequence, 558 residues long: Glutamine--tRNA ligase (558 aa).

Positions Pro36–His46 match the 'HIGH' region motif. ATP contacts are provided by residues Glu37–Asn39 and His43–Ser49. Residues Asp69 and Tyr214 each contribute to the L-glutamine site. Residues Thr233, Arg263 to Leu264, and Leu271 to Lys273 each bind ATP. The short motif at Leu270–Arg274 is the 'KMSKS' region element.

Belongs to the class-I aminoacyl-tRNA synthetase family. As to quaternary structure, monomer.

The protein resides in the cytoplasm. It carries out the reaction tRNA(Gln) + L-glutamine + ATP = L-glutaminyl-tRNA(Gln) + AMP + diphosphate. This Bradyrhizobium diazoefficiens (strain JCM 10833 / BCRC 13528 / IAM 13628 / NBRC 14792 / USDA 110) protein is Glutamine--tRNA ligase.